Reading from the N-terminus, the 157-residue chain is Crossover junction endodeoxyribonuclease RuvC (157 aa).

Residues aspartate 7, glutamate 67, and aspartate 139 contribute to the active site. Mg(2+) is bound by residues aspartate 7, glutamate 67, and aspartate 139.

This sequence belongs to the RuvC family. Homodimer which binds Holliday junction (HJ) DNA. The HJ becomes 2-fold symmetrical on binding to RuvC with unstacked arms; it has a different conformation from HJ DNA in complex with RuvA. In the full resolvosome a probable DNA-RuvA(4)-RuvB(12)-RuvC(2) complex forms which resolves the HJ. Mg(2+) is required as a cofactor.

It is found in the cytoplasm. The enzyme catalyses Endonucleolytic cleavage at a junction such as a reciprocal single-stranded crossover between two homologous DNA duplexes (Holliday junction).. Its function is as follows. The RuvA-RuvB-RuvC complex processes Holliday junction (HJ) DNA during genetic recombination and DNA repair. Endonuclease that resolves HJ intermediates. Cleaves cruciform DNA by making single-stranded nicks across the HJ at symmetrical positions within the homologous arms, yielding a 5'-phosphate and a 3'-hydroxyl group; requires a central core of homology in the junction. The consensus cleavage sequence is 5'-(A/T)TT(C/G)-3'. Cleavage occurs on the 3'-side of the TT dinucleotide at the point of strand exchange. HJ branch migration catalyzed by RuvA-RuvB allows RuvC to scan DNA until it finds its consensus sequence, where it cleaves and resolves the cruciform DNA. In Prochlorococcus marinus subsp. pastoris (strain CCMP1986 / NIES-2087 / MED4), this protein is Crossover junction endodeoxyribonuclease RuvC.